The chain runs to 67 residues: Conotoxin TsMMSK-B022 (67 aa).

The N-terminal stretch at 1 to 22 is a signal peptide; that stretch reads MMSKLGVLLTICLLLFPLTAVS. A propeptide spanning residues 23 to 50 is cleaved from the precursor; it reads LDGDQPADLPELRAQDFAPERSPWFDPV. 3 disulfides stabilise this stretch: cysteine 53–cysteine 65, cysteine 54–cysteine 61, and cysteine 58–cysteine 64. Proline 63 is modified (4-hydroxyproline).

Belongs to the conotoxin M superfamily. As to expression, expressed by the venom duct.

The protein localises to the secreted. In Conus tessulatus (Tessellate cone), this protein is Conotoxin TsMMSK-B022.